The following is a 633-amino-acid chain: tRNA uridine 5-carboxymethylaminomethyl modification enzyme MnmG (633 aa).

FAD is bound by residues 15–20 (GAGHAG), valine 127, and serine 182. 276-290 (GPRYCPSIEDKIVRF) provides a ligand contact to NAD(+). Glutamine 373 provides a ligand contact to FAD.

It belongs to the MnmG family. Homodimer. Heterotetramer of two MnmE and two MnmG subunits. Requires FAD as cofactor.

The protein localises to the cytoplasm. NAD-binding protein involved in the addition of a carboxymethylaminomethyl (cmnm) group at the wobble position (U34) of certain tRNAs, forming tRNA-cmnm(5)s(2)U34. The polypeptide is tRNA uridine 5-carboxymethylaminomethyl modification enzyme MnmG (Streptococcus thermophilus (strain ATCC BAA-491 / LMD-9)).